Reading from the N-terminus, the 87-residue chain is Exendin-3 (87 aa).

The signal sequence occupies residues 1 to 21 (MKIILWLCVFGLFLATLFPVS). Residues 22–45 (WQMPVESGLSSEDSASSESFASKI) constitute a propeptide that is removed on maturation. Position 86 is a serine amide (S86).

This sequence belongs to the glucagon family. As to expression, expressed by the venom gland.

Its subcellular location is the secreted. Stimulates vasoactive intestinal peptide (VIP) receptors in high concentrations (&gt;100 nM), resulting in both an increase in cAMP and amylase secretion from pancreatic acini, although at low concentrations (between 0.3 and 3 nM) it increases cAMP without stimulating amylase release. Stimulates the GLP-1 receptor (GLP1R). Induces hypotension that is mediated by relaxation of cardiac smooth muscle. In Heloderma horridum horridum (Mexican beaded lizard), this protein is Exendin-3.